Reading from the N-terminus, the 210-residue chain is uncharacterized protein (210 aa).

Positions 4-180 (RKVYLYVFHT…AVEVLKKLDV (177 aa)) constitute a PfpI endopeptidase domain. Cys110 functions as the Nucleophile in the catalytic mechanism.

Belongs to the peptidase C56 family.

This is an uncharacterized protein from Bacillus subtilis (strain 168).